The following is a 435-amino-acid chain: Shikimate O-hydroxycinnamoyltransferase (435 aa).

Active-site proton acceptor residues include His-153 and Asp-382.

It belongs to the plant acyltransferase family. In terms of tissue distribution, highly expressed in stem vascular tissues.

The enzyme catalyses shikimate + 4-coumaroyl-CoA = trans-4-coumaroylshikimate + CoA. In terms of biological role, acyltransferase involved in the biosynthesis of lignin. The affinity for shikimate as acceptor is 100-fold higher than for quinate. The most efficient donors are caffeoyl-CoA &gt; p-coumaroyl-CoA &gt; feruloyl-CoA &gt;&gt; sinapoyl-CoA. The polypeptide is Shikimate O-hydroxycinnamoyltransferase (HST) (Nicotiana tabacum (Common tobacco)).